We begin with the raw amino-acid sequence, 361 residues long: tRNA/tmRNA (uracil-C(5))-methyltransferase (361 aa).

S-adenosyl-L-methionine-binding residues include Gln-185, Tyr-213, Asn-218, Glu-234, and Asp-294. Catalysis depends on Cys-319, which acts as the Nucleophile. Catalysis depends on Glu-353, which acts as the Proton acceptor.

Belongs to the class I-like SAM-binding methyltransferase superfamily. RNA M5U methyltransferase family. TrmA subfamily.

The enzyme catalyses uridine(54) in tRNA + S-adenosyl-L-methionine = 5-methyluridine(54) in tRNA + S-adenosyl-L-homocysteine + H(+). It catalyses the reaction uridine(341) in tmRNA + S-adenosyl-L-methionine = 5-methyluridine(341) in tmRNA + S-adenosyl-L-homocysteine + H(+). Its function is as follows. Dual-specificity methyltransferase that catalyzes the formation of 5-methyluridine at position 54 (m5U54) in all tRNAs, and that of position 341 (m5U341) in tmRNA (transfer-mRNA). The sequence is that of tRNA/tmRNA (uracil-C(5))-methyltransferase from Pseudomonas putida (strain W619).